We begin with the raw amino-acid sequence, 426 residues long: Adenylosuccinate synthetase (426 aa).

Residues 14–20 and 42–44 each bind GTP; these read GDEGKGK and GHT. Asp-15 (proton acceptor) is an active-site residue. 2 residues coordinate Mg(2+): Asp-15 and Gly-42. Residues 15–18, 40–43, Thr-130, Arg-144, Gln-224, Thr-239, and Arg-303 each bind IMP; these read DEGK and NAGH. His-43 serves as the catalytic Proton donor. 299 to 305 is a binding site for substrate; that stretch reads TVTKRPR. GTP-binding positions include Arg-305, 331–333, and 413–415; these read LID and SVG.

Belongs to the adenylosuccinate synthetase family. Homodimer. Mg(2+) is required as a cofactor.

The protein localises to the cytoplasm. It carries out the reaction IMP + L-aspartate + GTP = N(6)-(1,2-dicarboxyethyl)-AMP + GDP + phosphate + 2 H(+). It functions in the pathway purine metabolism; AMP biosynthesis via de novo pathway; AMP from IMP: step 1/2. Functionally, plays an important role in the de novo pathway of purine nucleotide biosynthesis. Catalyzes the first committed step in the biosynthesis of AMP from IMP. The polypeptide is Adenylosuccinate synthetase (Malacoplasma penetrans (strain HF-2) (Mycoplasma penetrans)).